The chain runs to 223 residues: uncharacterized protein (223 aa).

The first 22 residues, 1–22, serve as a signal peptide directing secretion; the sequence is MHLKKALCPALCTFLIHLCLHA. A VWFA domain is found at 30–204; sequence DIFLMIDKSR…RSIAAAHSKR (175 aa). The disordered stretch occupies residues 199-223; that stretch reads AAHSKRPTPTPPAKESSPRYTPSLD.

This is an uncharacterized protein from Treponema pallidum (strain Nichols).